A 368-amino-acid chain; its full sequence is Phosphate acyltransferase (368 aa).

Residues 338–368 form a disordered region; it reads GDGGHDAGGAGTASPAPGHHAEPSAAQSSKA.

Belongs to the PlsX family. Homodimer. Probably interacts with PlsY.

The protein localises to the cytoplasm. The catalysed reaction is a fatty acyl-[ACP] + phosphate = an acyl phosphate + holo-[ACP]. The protein operates within lipid metabolism; phospholipid metabolism. Catalyzes the reversible formation of acyl-phosphate (acyl-PO(4)) from acyl-[acyl-carrier-protein] (acyl-ACP). This enzyme utilizes acyl-ACP as fatty acyl donor, but not acyl-CoA. In Burkholderia ambifaria (strain MC40-6), this protein is Phosphate acyltransferase.